The following is a 428-amino-acid chain: Enolase (428 aa).

Gln167 provides a ligand contact to (2R)-2-phosphoglycerate. Glu209 (proton donor) is an active-site residue. The Mg(2+) site is built by Asp246, Glu288, and Asp315. Lys340, Arg369, Ser370, and Lys391 together coordinate (2R)-2-phosphoglycerate. The active-site Proton acceptor is Lys340.

This sequence belongs to the enolase family. In terms of assembly, component of the RNA degradosome, a multiprotein complex involved in RNA processing and mRNA degradation. Requires Mg(2+) as cofactor.

It is found in the cytoplasm. Its subcellular location is the secreted. It localises to the cell surface. The enzyme catalyses (2R)-2-phosphoglycerate = phosphoenolpyruvate + H2O. It participates in carbohydrate degradation; glycolysis; pyruvate from D-glyceraldehyde 3-phosphate: step 4/5. Its function is as follows. Catalyzes the reversible conversion of 2-phosphoglycerate (2-PG) into phosphoenolpyruvate (PEP). It is essential for the degradation of carbohydrates via glycolysis. The sequence is that of Enolase from Pseudomonas savastanoi pv. phaseolicola (strain 1448A / Race 6) (Pseudomonas syringae pv. phaseolicola (strain 1448A / Race 6)).